We begin with the raw amino-acid sequence, 87 residues long: MKTLLLTLVVVTIVCLDLGYTRTCLISPSSTPQTCPQGQDICFLKAQCDKFCSIRGPVIEQGCVATCPQFRSNYRSLLCCTTDNCNH.

Residues 1–21 (MKTLLLTLVVVTIVCLDLGYT) form the signal peptide. 5 cysteine pairs are disulfide-bonded: Cys-24–Cys-42, Cys-35–Cys-63, Cys-48–Cys-52, Cys-67–Cys-79, and Cys-80–Cys-85.

Belongs to the three-finger toxin family. Long-chain subfamily. Kappa-neurotoxin sub-subfamily. In terms of assembly, homo- and heterodimer; non-covalently linked. As to expression, expressed by the venom gland.

It is found in the secreted. In terms of biological role, postsynaptic neurotoxin that binds and inhibits neuronal nicotinic acetylcholine receptors (nAChR) with high affinity (IC(50)&lt;100 nM). Is a selective, and slowly reversible antagonist of alpha-3/CHRNA3-containing and some alpha-4/CHRNA4-containing AChRs. This chain is Kappa 1a-bungarotoxin, found in Bungarus candidus (Malayan krait).